A 146-amino-acid polypeptide reads, in one-letter code: Angiogenin (146 aa).

The N-terminal stretch at 1–24 (MVMGLGLFLLVFMLGLGLTLPTLA) is a signal peptide. Position 25 is a pyrrolidone carboxylic acid (glutamine 25). Histidine 37 acts as the Proton acceptor in catalysis. Arginine 45 contacts tRNA. 3 disulfide bridges follow: cysteine 50–cysteine 105, cysteine 63–cysteine 116, and cysteine 81–cysteine 131. Residues 55–59 (RRRHL) carry the Nucleolar localization signal motif. Positions 105 and 127 each coordinate tRNA. Histidine 138 functions as the Proton donor in the catalytic mechanism.

Belongs to the pancreatic ribonuclease family. As to quaternary structure, homodimer. Interacts with RNH1; inhibiting ANG ribonuclease activity. Interacts with PCNA.

Its subcellular location is the secreted. It localises to the nucleus. The protein resides in the nucleolus. The protein localises to the cytoplasm. It is found in the stress granule. With respect to regulation, has weak tRNA ribonuclease activity by itself due to partial autoinhibition by its C-terminus, which folds into a short alpha-helix that partially occludes the substrate-binding site. In absence of stress, the ribonuclease activity is inhibited by RNH1 in the cytoplasm. In response to stress, dissociates from RNH1 in the cytoplasm and associates with cytoplasmic ribosomes with vacant A-sites: ribosomes directly activate the tRNA ribonuclease activity of ANG by refolding the C-terminal alpha-helix. In response to stress, the angiogenic activity of ANG is inhibited by RNH1 in the nucleus. Secreted ribonuclease that can either promote or restrict cell proliferation of target cells, depending on the context. Endocytosed in target cells via its receptor PLXNB2 and translocates to the cytoplasm or nucleus. Under stress conditions, localizes to the cytoplasm and promotes the assembly of stress granules (SGs): specifically cleaves a subset of tRNAs within anticodon loops to produce tRNA-derived stress-induced fragments (tiRNAs), resulting in translation repression and inhibition of cell proliferation. tiRNas also prevent formation of apoptosome, thereby promoting cell survival. Preferentially cleaves RNAs between a pyrimidine and an adenosine residue, suggesting that it cleaves the anticodon loop of tRNA(Ala) (32-UUAGCAU-38) after positions 33 and 36. Cleaves a subset of tRNAs, including tRNA(Ala), tRNA(Glu), tRNA(Gly), tRNA(Lys), tRNA(Val), tRNA(His), tRNA(Asp) and tRNA(Sec). Under growth conditions and in differentiated cells, translocates to the nucleus and stimulates ribosomal RNA (rRNA) transcription, including that containing the initiation site sequences of 45S rRNA, thereby promoting cell growth and proliferation. Angiogenin induces vascularization of normal and malignant tissues via its ability to promote rRNA transcription. Involved in hematopoietic stem and progenitor cell (HSPC) growth and survival by promoting rRNA transcription in growth conditions and inhibiting translation in response to stress, respectively. Mediates the crosstalk between myeloid and intestinal epithelial cells to protect the intestinal epithelial barrier integrity: secreted by myeloid cells and promotes intestinal epithelial cells proliferation and survival. Also mediates osteoclast-endothelial cell crosstalk in growing bone: produced by osteoclasts and protects the neighboring vascular cells against senescence by promoting rRNA transcription. In Papio hamadryas (Hamadryas baboon), this protein is Angiogenin (ANG).